Consider the following 278-residue polypeptide: Putative transposase for insertion sequence element IS986/IS6110 (278 aa).

Residues G101 to Y268 enclose the Integrase catalytic domain.

Its function is as follows. Involved in the transposition of the insertion sequence. This chain is Putative transposase for insertion sequence element IS986/IS6110, found in Mycobacterium tuberculosis (strain CDC 1551 / Oshkosh).